Consider the following 272-residue polypeptide: 2-succinyl-6-hydroxy-2,4-cyclohexadiene-1-carboxylate synthase (272 aa).

This sequence belongs to the AB hydrolase superfamily. MenH family. In terms of assembly, monomer.

The enzyme catalyses 5-enolpyruvoyl-6-hydroxy-2-succinyl-cyclohex-3-ene-1-carboxylate = (1R,6R)-6-hydroxy-2-succinyl-cyclohexa-2,4-diene-1-carboxylate + pyruvate. Its pathway is quinol/quinone metabolism; 1,4-dihydroxy-2-naphthoate biosynthesis; 1,4-dihydroxy-2-naphthoate from chorismate: step 3/7. The protein operates within quinol/quinone metabolism; menaquinone biosynthesis. Functionally, catalyzes a proton abstraction reaction that results in 2,5-elimination of pyruvate from 2-succinyl-5-enolpyruvyl-6-hydroxy-3-cyclohexene-1-carboxylate (SEPHCHC) and the formation of 2-succinyl-6-hydroxy-2,4-cyclohexadiene-1-carboxylate (SHCHC). This chain is 2-succinyl-6-hydroxy-2,4-cyclohexadiene-1-carboxylate synthase, found in Yersinia pseudotuberculosis serotype IB (strain PB1/+).